Reading from the N-terminus, the 289-residue chain is Probable endonuclease 4 (289 aa).

9 residues coordinate Zn(2+): histidine 74, histidine 115, glutamate 150, aspartate 184, histidine 187, histidine 218, aspartate 231, histidine 233, and glutamate 263.

The protein belongs to the AP endonuclease 2 family. It depends on Zn(2+) as a cofactor.

The enzyme catalyses Endonucleolytic cleavage to 5'-phosphooligonucleotide end-products.. In terms of biological role, endonuclease IV plays a role in DNA repair. It cleaves phosphodiester bonds at apurinic or apyrimidinic (AP) sites, generating a 3'-hydroxyl group and a 5'-terminal sugar phosphate. The protein is Probable endonuclease 4 of Mycoplasma mycoides subsp. mycoides SC (strain CCUG 32753 / NCTC 10114 / PG1).